Reading from the N-terminus, the 513-residue chain is Melianol synthase CYP71BQ4 (513 aa).

The helical transmembrane segment at 10-30 threads the bilayer; the sequence is MLHLPSLPVLLSFLLFLLMLI. A heme-binding site is contributed by cysteine 451.

It belongs to the cytochrome P450 family. It depends on heme as a cofactor. In terms of tissue distribution, accumulates in mature fruits and in juice vesicles.

The protein resides in the membrane. The catalysed reaction is dihydroniloticin + 2 reduced [NADPH--hemoprotein reductase] + 2 O2 = melianol + 2 oxidized [NADPH--hemoprotein reductase] + 3 H2O + 2 H(+). The protein operates within secondary metabolite biosynthesis; terpenoid biosynthesis. In terms of biological role, monooxygenase involved in the biosynthesis of limonoids triterpene natural products such as limonin, a compound with insecticidal activity responsible for the bitter taste in citrus. Catalyzes the conversion of dihydroniloticin to the protolimonoid melianol. This Citrus sinensis (Sweet orange) protein is Melianol synthase CYP71BQ4.